We begin with the raw amino-acid sequence, 348 residues long: MAIVSSNAGSSAPRREPVLDAQPLPEESSGRPDDGLRPKRLDDYIGQDELKQVLGIAVQAALGRGDALDHVLLYGPPGLGKTTMALVLAEELGVTCRITSAPALERPRDIVGLLVNVQPRDLLFIDEIHRLNRVSEELLYPAMEDRRLDLTVGKGSTARTRSLELPPFTLVGATTKAGSLSSPLRDRFGLIQRLEFYGQEDLEAIVSRTADLLGVSLSAGACRRIAGCCRGTPRIANRLLRRVRDVACVQGRQNQIDEGLVSQALSLHRVDHRGLDAGDRRLLAQLDQHHDGGPVGLETLAAALGEDPTTLESVVEPFLLQQGLLVRTPRGRMLTEAARAHLREQEVA.

The span at 1 to 10 shows a compositional bias: polar residues; sequence MAIVSSNAGS. A disordered region spans residues 1 to 41; it reads MAIVSSNAGSSAPRREPVLDAQPLPEESSGRPDDGLRPKRL. Residues 13-197 form a large ATPase domain (RuvB-L) region; it reads PRREPVLDAQ…FGLIQRLEFY (185 aa). Residues 28–41 show a composition bias toward basic and acidic residues; that stretch reads SSGRPDDGLRPKRL. ATP-binding residues include Leu36, Arg37, Gly78, Lys81, Thr82, Thr83, Arg187, Tyr197, and Arg234. A Mg(2+)-binding site is contributed by Thr82. The interval 198 to 269 is small ATPAse domain (RuvB-S); the sequence is GQEDLEAIVS…LVSQALSLHR (72 aa). Residues 272–348 form a head domain (RuvB-H) region; the sequence is HRGLDAGDRR…RAHLREQEVA (77 aa). DNA-binding residues include Arg327 and Arg332.

The protein belongs to the RuvB family. Homohexamer. Forms an RuvA(8)-RuvB(12)-Holliday junction (HJ) complex. HJ DNA is sandwiched between 2 RuvA tetramers; dsDNA enters through RuvA and exits via RuvB. An RuvB hexamer assembles on each DNA strand where it exits the tetramer. Each RuvB hexamer is contacted by two RuvA subunits (via domain III) on 2 adjacent RuvB subunits; this complex drives branch migration. In the full resolvosome a probable DNA-RuvA(4)-RuvB(12)-RuvC(2) complex forms which resolves the HJ.

The protein localises to the cytoplasm. It carries out the reaction ATP + H2O = ADP + phosphate + H(+). Its function is as follows. The RuvA-RuvB-RuvC complex processes Holliday junction (HJ) DNA during genetic recombination and DNA repair, while the RuvA-RuvB complex plays an important role in the rescue of blocked DNA replication forks via replication fork reversal (RFR). RuvA specifically binds to HJ cruciform DNA, conferring on it an open structure. The RuvB hexamer acts as an ATP-dependent pump, pulling dsDNA into and through the RuvAB complex. RuvB forms 2 homohexamers on either side of HJ DNA bound by 1 or 2 RuvA tetramers; 4 subunits per hexamer contact DNA at a time. Coordinated motions by a converter formed by DNA-disengaged RuvB subunits stimulates ATP hydrolysis and nucleotide exchange. Immobilization of the converter enables RuvB to convert the ATP-contained energy into a lever motion, pulling 2 nucleotides of DNA out of the RuvA tetramer per ATP hydrolyzed, thus driving DNA branch migration. The RuvB motors rotate together with the DNA substrate, which together with the progressing nucleotide cycle form the mechanistic basis for DNA recombination by continuous HJ branch migration. Branch migration allows RuvC to scan DNA until it finds its consensus sequence, where it cleaves and resolves cruciform DNA. The protein is Holliday junction branch migration complex subunit RuvB of Parasynechococcus marenigrum (strain WH8102).